A 339-amino-acid polypeptide reads, in one-letter code: Chromo domain-containing protein cec-3 (339 aa).

A disordered region spans residues 1–21; it reads MSNEGSREESREPEAREGKSD. The region spanning 24 to 84 is the Chromo domain; sequence FEVEKILAHK…KLKVTDKTEL (61 aa). Basic residues predominate over residues 91 to 105; the sequence is QIKKNKSQKSKKRSK. 2 disordered regions span residues 91–199 and 215–272; these read QIKK…APLS and EEKA…QRTL. 2 stretches are compositionally biased toward basic and acidic residues: residues 106–117 and 171–183; these read TVSDHESNHDSD and AAME…RNWL. Acidic residues predominate over residues 184–193; sequence DEESSDDEAE. The span at 230-241 shows a compositional bias: basic and acidic residues; that stretch reads KPREVVIKKDPS. A compositionally biased stretch (low complexity) spans 242 to 251; sequence ESPVASASSV.

In terms of tissue distribution, expressed in every cell of the embryo (at protein level). In adults, expressed predominantly in the head region and the germline.

Its subcellular location is the chromosome. It localises to the nucleus. Functionally, specifically recognizes and binds methylated 'Lys-9' of histone H3 (H3K9me), with highest preference for trimethylated 'Lys-9' (H3K9me3) followed by dimethylated 'Lys-9' (H3K9me2) followed by monomethylated 'Lys-9' (H3K9me1). Plays a role in maintaining correct unc-4 expression in the VC motor neurons where unc-4 is expressed in the vulval but not in the non-vulval VC neurons. The chain is Chromo domain-containing protein cec-3 (cec-3) from Caenorhabditis elegans.